Here is a 241-residue protein sequence, read N- to C-terminus: Tumor necrosis factor receptor superfamily member 18 (241 aa).

The N-terminal stretch at 1–25 (MAQHGAMGAFRALCGLALLCALSLG) is a signal peptide. The Extracellular segment spans residues 26–162 (QRPTGGPGCG…CVPGSPPAEP (137 aa)). Intrachain disulfides connect C34–C49, C74–C86, C81–C94, C115–C134, and C128–C153. TNFR-Cys repeat units lie at residues 34–72 (CGPG…EWDC), 74–112 (CVQP…GFQC), and 115–153 (CASG…NAVC). N146 is a glycosylation site (N-linked (GlcNAc...) asparagine). Residues 163 to 183 (LGWLTVVLLAVAACVLLLTSA) traverse the membrane as a helical segment. Topologically, residues 184–241 (QLGLHIWQLRSQCMWPRETQLLLEVPPSTEDARSCQFPEEERGERSAEEKGRLGDLWV) are cytoplasmic. Residues 214–241 (DARSCQFPEEERGERSAEEKGRLGDLWV) form a disordered region. Positions 222–241 (EEERGERSAEEKGRLGDLWV) are enriched in basic and acidic residues.

In terms of assembly, binds to TRAF1, TRAF2, and TRAF3, but not TRAF5 and TRAF6. Binds through its C-terminus to SIVA1/SIVA. As to expression, expressed in lymph node, peripheral blood leukocytes and weakly in spleen.

The protein localises to the cell membrane. It is found in the secreted. Receptor for TNFSF18. Seems to be involved in interactions between activated T-lymphocytes and endothelial cells and in the regulation of T-cell receptor-mediated cell death. Mediated NF-kappa-B activation via the TRAF2/NIK pathway. This Homo sapiens (Human) protein is Tumor necrosis factor receptor superfamily member 18 (TNFRSF18).